Here is a 265-residue protein sequence, read N- to C-terminus: MSWEGFKKAINRAGHSVIIKNVDKTIDKEYDMEERRYKVLQRAGEALQKEAKGFLDSLRAVTASQTTIAEVISNLYDDSKYVAGGGYNVGNYYLQCVQDFDSETVKQLDGPLRETVLDPITKFSTYFKEIEEAIKKRDHKKQDFDAAKAKVRRLVDKPAKDASKLPRAEKELSLAKDIFENLNNQLKTELPQLVSLRVPYFDPSFEALIKIQLRFCTDGYTRLAQIQQYLDQQSRDDYANGLLDTKIEELLGQMTSLDICALGIK.

The BAR domain maps to 15-239 (HSVIIKNVDK…LDQQSRDDYA (225 aa)). A coiled-coil region spans residues 126 to 193 (YFKEIEEAIK…NQLKTELPQL (68 aa)).

It localises to the cytoplasm. The protein localises to the cytoskeleton. Its function is as follows. Component of a cytoskeletal structure that is required for the formation of endocytic vesicles at the plasma membrane level. The sequence is that of Reduced viability upon starvation protein 161 (RVS161) from Saccharomyces cerevisiae (strain ATCC 204508 / S288c) (Baker's yeast).